A 523-amino-acid chain; its full sequence is NAD(P)H-quinone oxidoreductase subunit 2 (523 aa).

A run of 13 helical transmembrane segments spans residues 29-49 (AVAP…VDLA), 57-77 (WVPP…ALQW), 94-114 (LAIA…MISW), 128-148 (AGIL…TDLV), 182-202 (LLVG…LYGL), 223-243 (AALA…AVPF), 255-275 (PTPV…ALAL), 291-311 (LLFT…ALAQ), 317-337 (MLAY…VCGT), 345-365 (VLYT…IILF), 389-409 (LGLS…GFFG), 424-444 (VLVV…IGVI), and 477-497 (VALV…NPLF).

This sequence belongs to the complex I subunit 2 family. NDH-1 can be composed of about 15 different subunits; different subcomplexes with different compositions have been identified which probably have different functions.

The protein resides in the cellular thylakoid membrane. The enzyme catalyses a plastoquinone + NADH + (n+1) H(+)(in) = a plastoquinol + NAD(+) + n H(+)(out). It carries out the reaction a plastoquinone + NADPH + (n+1) H(+)(in) = a plastoquinol + NADP(+) + n H(+)(out). Its function is as follows. NDH-1 shuttles electrons from an unknown electron donor, via FMN and iron-sulfur (Fe-S) centers, to quinones in the respiratory and/or the photosynthetic chain. The immediate electron acceptor for the enzyme in this species is believed to be plastoquinone. Couples the redox reaction to proton translocation, and thus conserves the redox energy in a proton gradient. Cyanobacterial NDH-1 also plays a role in inorganic carbon-concentration. The protein is NAD(P)H-quinone oxidoreductase subunit 2 of Synechococcus sp. (strain WH7803).